A 3680-amino-acid chain; its full sequence is Dystrophin (3680 aa).

Residues 1 to 237 (MLWWEEVEDC…ILMYITSLFQ (237 aa)) form an actin-binding region. Calponin-homology (CH) domains follow at residues 15-119 (DVQK…LHWQ) and 134-240 (TNSE…QVLP). An ANK2- and ANK-3 binding region spans residues 63–72 (PKEKGSTRVH). Positions 310–323 (TSDPTRSPLPSQHL) are enriched in polar residues. The segment at 310-332 (TSDPTRSPLPSQHLETPEDKSFG) is disordered. Spectrin repeat units lie at residues 340–448 (ANLD…NLHK), 449–557 (VLMD…LLQD), 560–668 (LKWQ…QISQ), 720–829 (EIRK…WLEY), 831–935 (NNII…ELQT), 944–1047 (RYQE…KLEE), 1050–1156 (AKLR…ALKG), 1159–1265 (DKTV…TLEE), 1268–1369 (ACWH…LLEQ), 1370–1465 (SIQS…LFQK), 1470–1570 (EQRL…QLEK), 1573–1678 (KLSR…LLLE), 1681–1780 (KHME…KASI), 1781–1876 (PLKE…KALE), 1879–1981 (HQWY…TVHE), 1994–2103 (EISY…RFDR), 2106–2210 (EKWR…RLEE), 2213–2320 (NILS…EIEA), 2321–2418 (HVKD…LRAK), 2470–2572 (FNRA…QLTE), 2575–2681 (KDST…ALEE), 2684–2797 (RLLQ…HLEA), 2803–2925 (KRLH…RKID), and 2930–3035 (RLQE…QLHE). The tract at residues 1418 to 1915 (DLTSHEISLE…PEPRDERKIK (498 aa)) is interaction with SYNM. Residues 3050 to 3083 (TSVQGPWERAISPNKVPYYINHETQTTCWDHPKM) enclose the WW domain. Residues 3053–3403 (QGPWERAISP…TVLEGDNMET (351 aa)) form an interaction with SYNM region. Residues 3303 to 3359 (KHQAKCNICKECPIIGFRYRSLKHFNYDICQSCFFSGRVAKGHKMHYPMVEYCTPTT) form a ZZ-type; degenerate zinc finger. Zn(2+)-binding residues include C3308, C3311, C3332, and C3335. The interval 3461-3513 (DDEHLLIQHYWRSLNQESPLSQPRSPAQILISLESEERGELERILADLEGRNR) is binds to SNTB1. Phosphoserine occurs at positions 3478, 3485, and 3495. 2 disordered regions span residues 3524–3549 (QQHEHKGLSPLPSPPEMMPTSPQSPR) and 3595–3680 (PQAE…EDTM). 2 stretches are compositionally biased toward polar residues: residues 3602–3621 (NGTTVSSPSTSLQRSDSSQP) and 3658–3668 (LNHSFPSSRGR). 6 positions are modified to phosphoserine: S3607, S3608, S3612, S3618, S3619, and S3661.

In terms of assembly, interacts with SYNM. Interacts with the syntrophins SNTG1 and SNTG2. Interacts with KRT19. Component of the dystrophin-associated glycoprotein complex which is composed of three subcomplexes: a cytoplasmic complex comprised of DMD (or UTRN), DTNA and a number of syntrophins, such as SNTB1, SNTB2, SNTG1 and SNTG2, the transmembrane dystroglycan complex, and the sarcoglycan-sarcospan complex. Interacts with DAG1 (betaDAG1) with DMD; the interaction is inhibited by phosphorylation on the PPXY motif of DAG1. Interacts with SYNM; SNTA1 and SNTB1. Interacts with CMYA5. Directly interacts with ANK2 and ANK3; these interactions do not interfere with betaDAG1-binding and are necessary for proper localization in muscle cells. Identified in a dystroglycan complex that contains at least PRX, DRP2, UTRN, DMD and DAG1. Interacts with DTNB. Interacts with PGM5; the interaction is direct. Interacts with NOS1; localizes NOS1 to sarcolemma in muscle cells.

The protein resides in the cell membrane. It is found in the sarcolemma. Its subcellular location is the cytoplasm. It localises to the cytoskeleton. The protein localises to the postsynaptic cell membrane. In terms of biological role, anchors the extracellular matrix to the cytoskeleton via F-actin. Ligand for dystroglycan. Component of the dystrophin-associated glycoprotein complex which accumulates at the neuromuscular junction (NMJ) and at a variety of synapses in the peripheral and central nervous systems and has a structural function in stabilizing the sarcolemma. Also implicated in signaling events and synaptic transmission. The polypeptide is Dystrophin (DMD) (Canis lupus familiaris (Dog)).